The sequence spans 252 residues: Neurexophilin-3 (252 aa).

A signal peptide spans 1 to 22; it reads MQLTRCCFVFLVQGSLYLVICG. The tract at residues 23 to 75 is II; sequence QEDGPPGSEDPEHDDHEGQPRPRVPRKRGHISPKSRPLANSTLLGLLAPPGEV. The interval 27–59 is disordered; that stretch reads PPGSEDPEHDDHEGQPRPRVPRKRGHISPKSRP. Residues 45–55 show a composition bias toward basic residues; sequence RVPRKRGHISP. Residues asparagine 62, asparagine 127, asparagine 137, and asparagine 143 are each glycosylated (N-linked (GlcNAc...) asparagine). The tract at residues 76 to 157 is III; it reads WGILGQPPNR…LVPPSKAVEF (82 aa). The IV (linker domain) stretch occupies residues 158–166; it reads HQEQQIFIE. The v (Cys-rich) stretch occupies residues 167-252; sequence AKASKIFNCR…HSDTPYYPSG (86 aa).

The protein belongs to the neurexophilin family. In terms of processing, may be proteolytically processed at the boundary between the N-terminal non-conserved and the central conserved domain in neuron-like cells. As to expression, brain. Detected in several other tissues.

The protein resides in the secreted. Its function is as follows. May be signaling molecules that resemble neuropeptides. Ligand for alpha-neurexins. The chain is Neurexophilin-3 (Nxph3) from Rattus norvegicus (Rat).